The following is a 483-amino-acid chain: Aspartyl/glutamyl-tRNA(Asn/Gln) amidotransferase subunit B (483 aa).

The protein belongs to the GatB/GatE family. GatB subfamily. As to quaternary structure, heterotrimer of A, B and C subunits.

The catalysed reaction is L-glutamyl-tRNA(Gln) + L-glutamine + ATP + H2O = L-glutaminyl-tRNA(Gln) + L-glutamate + ADP + phosphate + H(+). It carries out the reaction L-aspartyl-tRNA(Asn) + L-glutamine + ATP + H2O = L-asparaginyl-tRNA(Asn) + L-glutamate + ADP + phosphate + 2 H(+). Its function is as follows. Allows the formation of correctly charged Asn-tRNA(Asn) or Gln-tRNA(Gln) through the transamidation of misacylated Asp-tRNA(Asn) or Glu-tRNA(Gln) in organisms which lack either or both of asparaginyl-tRNA or glutaminyl-tRNA synthetases. The reaction takes place in the presence of glutamine and ATP through an activated phospho-Asp-tRNA(Asn) or phospho-Glu-tRNA(Gln). The polypeptide is Aspartyl/glutamyl-tRNA(Asn/Gln) amidotransferase subunit B (Rickettsia bellii (strain RML369-C)).